The primary structure comprises 316 residues: Transaldolase (316 aa).

Lysine 132 serves as the catalytic Schiff-base intermediate with substrate.

This sequence belongs to the transaldolase family. Type 1 subfamily. Homodimer.

It is found in the cytoplasm. It catalyses the reaction D-sedoheptulose 7-phosphate + D-glyceraldehyde 3-phosphate = D-erythrose 4-phosphate + beta-D-fructose 6-phosphate. It functions in the pathway carbohydrate degradation; pentose phosphate pathway; D-glyceraldehyde 3-phosphate and beta-D-fructose 6-phosphate from D-ribose 5-phosphate and D-xylulose 5-phosphate (non-oxidative stage): step 2/3. Functionally, transaldolase is important for the balance of metabolites in the pentose-phosphate pathway. The protein is Transaldolase of Vibrio parahaemolyticus serotype O3:K6 (strain RIMD 2210633).